The following is a 237-amino-acid chain: Ribitol-5-phosphate cytidylyltransferase (237 aa).

Residues 7–10 (LAGG) and 80–86 (GEDRNET) each bind CTP.

This sequence belongs to the IspD/TarI cytidylyltransferase family. TarI subfamily.

The catalysed reaction is D-ribitol 5-phosphate + CTP + H(+) = CDP-L-ribitol + diphosphate. It participates in cell wall biogenesis; poly(ribitol phosphate) teichoic acid biosynthesis. In terms of biological role, catalyzes the transfer of the cytidylyl group of CTP to D-ribitol 5-phosphate. This is Ribitol-5-phosphate cytidylyltransferase from Listeria innocua serovar 6a (strain ATCC BAA-680 / CLIP 11262).